Reading from the N-terminus, the 172-residue chain is Shikimate kinase 2 (172 aa).

Position 9 to 16 (G9 to T16) interacts with ATP.

The protein belongs to the shikimate kinase family.

The protein resides in the cytoplasm. The catalysed reaction is shikimate + ATP = 3-phosphoshikimate + ADP + H(+). Its pathway is metabolic intermediate biosynthesis; chorismate biosynthesis; chorismate from D-erythrose 4-phosphate and phosphoenolpyruvate: step 5/7. This Syntrophotalea carbinolica (strain DSM 2380 / NBRC 103641 / GraBd1) (Pelobacter carbinolicus) protein is Shikimate kinase 2.